A 290-amino-acid polypeptide reads, in one-letter code: Lipoyl synthase (290 aa).

Cys-38, Cys-43, Cys-49, Cys-64, Cys-68, Cys-71, and Ser-277 together coordinate [4Fe-4S] cluster. The region spanning 50–266 (WSKGTATFLL…REIALDAGFR (217 aa)) is the Radical SAM core domain.

The protein belongs to the radical SAM superfamily. Lipoyl synthase family. Requires [4Fe-4S] cluster as cofactor.

The protein localises to the cytoplasm. The catalysed reaction is [[Fe-S] cluster scaffold protein carrying a second [4Fe-4S](2+) cluster] + N(6)-octanoyl-L-lysyl-[protein] + 2 oxidized [2Fe-2S]-[ferredoxin] + 2 S-adenosyl-L-methionine + 4 H(+) = [[Fe-S] cluster scaffold protein] + N(6)-[(R)-dihydrolipoyl]-L-lysyl-[protein] + 4 Fe(3+) + 2 hydrogen sulfide + 2 5'-deoxyadenosine + 2 L-methionine + 2 reduced [2Fe-2S]-[ferredoxin]. Its pathway is protein modification; protein lipoylation via endogenous pathway; protein N(6)-(lipoyl)lysine from octanoyl-[acyl-carrier-protein]: step 2/2. Functionally, catalyzes the radical-mediated insertion of two sulfur atoms into the C-6 and C-8 positions of the octanoyl moiety bound to the lipoyl domains of lipoate-dependent enzymes, thereby converting the octanoylated domains into lipoylated derivatives. The protein is Lipoyl synthase of Chlorobaculum tepidum (strain ATCC 49652 / DSM 12025 / NBRC 103806 / TLS) (Chlorobium tepidum).